The sequence spans 177 residues: Peptidyl-prolyl cis-trans isomerase H (177 aa).

Position 2 is an N-acetylalanine (Ala-2). Positions 14 to 176 (FFDVSIGGQE…LPVVISQCGE (163 aa)) constitute a PPIase cyclophilin-type domain.

Belongs to the cyclophilin-type PPIase family. PPIase H subfamily. Interacts directly with PRPF4. Part of a heteromeric complex containing PPIH, PRPF3 and PRPF4 that is stable in the absence of RNA. Component of the U4/U6-U5 tri-snRNP complex composed of the U4, U6 and U5 snRNAs and at least PRPF3, PRPF4, PRPF6, PRPF8, PRPF31, SNRNP200, TXNL4A, SNRNP40, DDX23, CD2BP2, PPIH, SNU13, EFTUD2, SART1 and USP39. Heterodimer with PRPF18.

It is found in the nucleus speckle. Its subcellular location is the cytoplasm. The enzyme catalyses [protein]-peptidylproline (omega=180) = [protein]-peptidylproline (omega=0). Inhibited by cyclosporin A. Functionally, PPIase that catalyzes the cis-trans isomerization of proline imidic peptide bonds in oligopeptides and may therefore assist protein folding. Participates in pre-mRNA splicing. May play a role in the assembly of the U4/U5/U6 tri-snRNP complex, one of the building blocks of the spliceosome. May act as a chaperone. This is Peptidyl-prolyl cis-trans isomerase H (PPIH) from Homo sapiens (Human).